The following is a 100-amino-acid chain: Urease subunit gamma (100 aa).

Belongs to the urease gamma subunit family. In terms of assembly, heterotrimer of UreA (gamma), UreB (beta) and UreC (alpha) subunits. Three heterotrimers associate to form the active enzyme.

It localises to the cytoplasm. It carries out the reaction urea + 2 H2O + H(+) = hydrogencarbonate + 2 NH4(+). The protein operates within nitrogen metabolism; urea degradation; CO(2) and NH(3) from urea (urease route): step 1/1. The polypeptide is Urease subunit gamma (Synechococcus sp. (strain CC9902)).